The primary structure comprises 475 residues: Ankyrin repeat, SAM and basic leucine zipper domain-containing protein 1 (475 aa).

The disordered stretch occupies residues methionine 1 to tryptophan 25. Residues serine 17, serine 18, and serine 20 each carry the phosphoserine modification. 6 ANK repeats span residues glutamate 45–serine 74, tyrosine 78–phenylalanine 107, aspartate 110–valine 144, arginine 148–threonine 177, asparagine 181–leucine 210, and aspartate 214–glycine 243. The SAM domain maps to serine 272–glutamine 334.

In terms of assembly, interacts with DDX4, PIWIL1, RANBP9 and TDRD1.

The protein resides in the cytoplasm. Plays a central role during spermatogenesis by repressing transposable elements and preventing their mobilization, which is essential for the germline integrity. Acts via the piRNA metabolic process, which mediates the repression of transposable elements during meiosis by forming complexes composed of piRNAs and Piwi proteins and governs the methylation and subsequent repression of transposons. Its association with pi-bodies suggests a participation in the primary piRNAs metabolic process. Required prior to the pachytene stage to facilitate the production of multiple types of piRNAs, including those associated with repeats involved in the regulation of retrotransposons. May act by mediating protein-protein interactions during germ cell maturation. This is Ankyrin repeat, SAM and basic leucine zipper domain-containing protein 1 (ASZ1) from Nomascus leucogenys (Northern white-cheeked gibbon).